The sequence spans 219 residues: 7-cyano-7-deazaguanine synthase (219 aa).

Position 10-20 (10-20) interacts with ATP; it reads FSGGQDSTTCL. Zn(2+) is bound by residues Cys-188, Cys-197, Cys-200, and Cys-203.

The protein belongs to the QueC family. It depends on Zn(2+) as a cofactor.

The catalysed reaction is 7-carboxy-7-deazaguanine + NH4(+) + ATP = 7-cyano-7-deazaguanine + ADP + phosphate + H2O + H(+). Its pathway is purine metabolism; 7-cyano-7-deazaguanine biosynthesis. Functionally, catalyzes the ATP-dependent conversion of 7-carboxy-7-deazaguanine (CDG) to 7-cyano-7-deazaguanine (preQ(0)). The sequence is that of 7-cyano-7-deazaguanine synthase from Bacteroides fragilis (strain ATCC 25285 / DSM 2151 / CCUG 4856 / JCM 11019 / LMG 10263 / NCTC 9343 / Onslow / VPI 2553 / EN-2).